Consider the following 874-residue polypeptide: Leucine--tRNA ligase (874 aa).

The 'HIGH' region motif lies at 47–57 (PYPSGKLHMGH). Residues 636–640 (KMSKS) carry the 'KMSKS' region motif. Position 639 (K639) interacts with ATP.

It belongs to the class-I aminoacyl-tRNA synthetase family.

It localises to the cytoplasm. It catalyses the reaction tRNA(Leu) + L-leucine + ATP = L-leucyl-tRNA(Leu) + AMP + diphosphate. The chain is Leucine--tRNA ligase from Acinetobacter baumannii (strain SDF).